We begin with the raw amino-acid sequence, 220 residues long: Metalloproteinase inhibitor 2 (220 aa).

The signal sequence occupies residues 1-26 (MGAAARSLRLALGLLLLATLLRPADA). Zn(2+) is bound at residue C27. 2 involved in metalloproteinase-binding regions span residues 27–30 (CSCS) and 95–96 (SA). 6 disulfide bridges follow: C27–C98, C29–C127, C39–C152, C154–C201, C159–C164, and C172–C193. In terms of domain architecture, NTR spans 27 to 152 (CSCSPVHPQQ…SLNHRYQMGC (126 aa)).

The protein belongs to the protease inhibitor I35 (TIMP) family. In terms of assembly, interacts (via the C-terminal) with MMP2 (via the C-terminal PEX domain); the interaction inhibits the MMP2 activity. The activity of TIMP2 is dependent on the presence of disulfide bonds.

It localises to the secreted. Functionally, complexes with metalloproteinases (such as collagenases) and irreversibly inactivates them by binding to their catalytic zinc cofactor. The polypeptide is Metalloproteinase inhibitor 2 (Timp2) (Rattus norvegicus (Rat)).